The following is a 389-amino-acid chain: MAMNYLEAFPKELREYYKNLFGKEEANKIMKKLREPVEHYYIRVNTLKISREKLIGELKKEGLKPLRSPYLPEGLYFVREGPNFSDDFEPKLPVVVANKYAAESVYQGAMLYAPGVLKADKNIKEGDEVQIRDPKGLLVGIGIARMDYKEMTEATRGLAVEVTLPKFKLPSLSELKAFEKGYFYPQGLPSMVTARVLEPKEDDVIIDMAAAPGGKTTHIAQLLENKGEIIAIDKSKNRLRKMEENIKRLGVKNVKLVQMDARKLPDLGIKADKILLDAPCTALGVRPKLWEERTLKHIEATARYQRAFIWAAIKSLRRGGVLVYSTCTLSYEENEGNVKFMIRKGMKLEEQSIFIGSPGIGMNKVQRFYPHKHLTQGFFIAKLRKVKDI.

A PUA domain is found at 92–167; the sequence is LPVVVANKYA…LAVEVTLPKF (76 aa). Residues 209 to 215, Asp233, Arg238, Asp260, Asp277, and Tyr304 each bind S-adenosyl-L-methionine; that span reads AAAPGGK. Cys327 functions as the Nucleophile in the catalytic mechanism.

The protein belongs to the class I-like SAM-binding methyltransferase superfamily. RsmB/NOP family.

The enzyme catalyses cytidine(72) in tRNA + S-adenosyl-L-methionine = 5-methylcytidine(72) in tRNA + S-adenosyl-L-homocysteine + H(+). The catalysed reaction is cytidine(72) in tRNA(Thr) + S-adenosyl-L-methionine = 5-methylcytidine(72) in tRNA(Thr) + S-adenosyl-L-homocysteine + H(+). It carries out the reaction cytidine(72) in tRNA(Cys) + S-adenosyl-L-methionine = 5-methylcytidine(72) in tRNA(Cys) + S-adenosyl-L-homocysteine + H(+). S-adenosyl-L-methionine-dependent methyltransferase that specifically methylates the C5 position of cytosine 72 in several tRNAs. This modification appears to slightly promote the thermal stability of P.horikoshii tRNAs, but does not affect their amino acid accepting activity. Four elements in the acceptor stems of tRNAs are essential for substrate recognition by this enzyme: the target site C72, the 3'-CCA terminus, U73 or G73, and the second base pair C2:G71. The protein is tRNA (cytosine(72)-C(5))-methyltransferase of Pyrococcus horikoshii (strain ATCC 700860 / DSM 12428 / JCM 9974 / NBRC 100139 / OT-3).